A 599-amino-acid chain; its full sequence is Glucose-6-phosphate 1-dehydrogenase 3, chloroplastic (599 aa).

Positions 1–18 are enriched in low complexity; that stretch reads MSSLSCPTYRSRTSSSSP. A disordered region spans residues 1–23; that stretch reads MSSLSCPTYRSRTSSSSPFLSNH. The transit peptide at 1-66 directs the protein to the chloroplast; sequence MSSLSCPTYR…RSQRRSVQSS (66 aa). Val-67 is subject to N-acetylvaline. NADP(+)-binding positions include 119–126 and Arg-153; that span reads GASGDLAK. A disulfide bond links Cys-171 and Cys-179. Residue Lys-256 coordinates NADP(+). Residues Lys-256, 286–290, Glu-324, and Asp-343 each bind D-glucose 6-phosphate; that span reads HYLGK. Catalysis depends on His-348, which acts as the Proton acceptor. Lys-441 provides a ligand contact to NADP(+). 2 residues coordinate D-glucose 6-phosphate: Lys-444 and Arg-449. The NADP(+) site is built by Arg-454 and Arg-483. D-glucose 6-phosphate is bound at residue Gln-485. NADP(+) contacts are provided by residues 491–493 and Arg-576; that span reads YLK.

This sequence belongs to the glucose-6-phosphate dehydrogenase family. As to quaternary structure, forms homodimer. Interacts with G6PD1. As to expression, expressed in roots, flowers and siliques.

It localises to the plastid. It is found in the chloroplast stroma. The enzyme catalyses D-glucose 6-phosphate + NADP(+) = 6-phospho-D-glucono-1,5-lactone + NADPH + H(+). The protein operates within carbohydrate degradation; pentose phosphate pathway; D-ribulose 5-phosphate from D-glucose 6-phosphate (oxidative stage): step 1/3. Its activity is regulated as follows. Regulated by metabolites. Post-translationally inactivated by cysteine-mediated redox modification via the ferredoxin-thioredoxin system in the light and this avoids futile cycles with photosynthetic CO2 fixation. Catalyzes the rate-limiting step of the oxidative pentose-phosphate pathway, which represents a route for the dissimilation of carbohydrates besides glycolysis. The main function of this enzyme is to provide reducing power (NADPH) and pentose phosphates for fatty acid and nucleic acid synthesis which are involved in membrane synthesis and cell division. This chain is Glucose-6-phosphate 1-dehydrogenase 3, chloroplastic, found in Arabidopsis thaliana (Mouse-ear cress).